Consider the following 725-residue polypeptide: Kinesin-like protein KIF2C (725 aa).

Ala-2 is modified (N-acetylalanine). Residues 2-254 (AMDSSLQARL…CHPLTMTDPI (253 aa)) form a globular region. A phosphoserine mark is found at Ser-6 and Ser-22. The tract at residues 89-116 (QKQKRRSVNSKIPAPKESLRSRSTRMST) is disordered. Ser-95 carries the phosphoserine; by AURKB modification. Positions 98-101 (SKIP) match the Microtubule tip localization signal motif. A phosphoserine mark is found at Ser-106, Ser-109, Ser-111, Ser-115, Ser-166, Ser-175, Ser-187, and Ser-192. The tract at residues 207-238 (EKKAQNSEMRMKRAQEYDSSFPNWEFARMIKE) is negative regulator of microtubule-binding. Residues 258-588 (RICVCVRKRP…LRYADRVKEL (331 aa)) form the Kinesin motor domain. ATP is bound by residues Arg-264 and 348 to 355 (GQTGSGKT). The short motif at 415 to 418 (KKAK) is the Nuclear localization signal element. Phosphoserine is present on residues Ser-519, Ser-621, and Ser-633. A coiled-coil region spans residues 618–658 (GNLSKEEEELSSQMSSFNEAMTQIRELEEKAMEELKEIIQQ).

This sequence belongs to the TRAFAC class myosin-kinesin ATPase superfamily. Kinesin family. MCAK/KIF2 subfamily. As to quaternary structure, interacts with CENPH. Interacts with MTUS2/TIP150; the interaction is direct. Interacts with MAPRE1; the interaction is direct, regulated by phosphorylation and is probably required for targeting to growing microtubule plus ends. Interacts with KIF18B at microtubule tips; this interaction increases the affinity of both partners for microtubule plus ends and is required for robust microtubule depolymerization. Phosphorylation by AURKA or AURKB strongly reduces KIF18B-binding. In terms of processing, phosphorylation by AURKB, regulates association with centromeres and kinetochores and the microtubule depolymerization activity. Post-translationally, ubiquitinated. As to expression, expressed at high levels in thymus and testis, at low levels in small intestine, the mucosal lining of colon, and placenta, and at very low levels in spleen and ovary; expression is not detected in prostate, peripheral blood Leukocytes, heart, brain, lung, liver, skeletal muscle, kidney or pancreas. Isoform 2 is testis-specific.

It localises to the cytoplasm. The protein resides in the cytoskeleton. The protein localises to the nucleus. It is found in the chromosome. Its subcellular location is the centromere. It localises to the kinetochore. In complex with KIF18B, constitutes the major microtubule plus-end depolymerizing activity in mitotic cells. Regulates the turnover of microtubules at the kinetochore and functions in chromosome segregation during mitosis. Plays a role in chromosome congression and is required for the lateral to end-on conversion of the chromosome-microtubule attachment. The protein is Kinesin-like protein KIF2C (KIF2C) of Homo sapiens (Human).